A 316-amino-acid chain; its full sequence is Phospholipase A1 3 (316 aa).

Residues 1 to 4 (ADDL) form the signal peptide. The propeptide occupies 5-14 (TTLRNGTLDR). An intrachain disulfide couples cysteine 20 to cysteine 103. Serine 153 acts as the Nucleophile in catalysis. Aspartate 181 (charge relay system) is an active-site residue. 2 disulfide bridges follow: cysteine 192-cysteine 197 and cysteine 235-cysteine 240. The active-site Charge relay system is histidine 242. Disulfide bonds link cysteine 257–cysteine 284, cysteine 258–cysteine 309, and cysteine 277–cysteine 282.

The protein belongs to the AB hydrolase superfamily. Lipase family. As to expression, expressed by the venom gland.

Its subcellular location is the secreted. The catalysed reaction is a 1,2-diacyl-sn-glycero-3-phosphocholine + H2O = a 2-acyl-sn-glycero-3-phosphocholine + a fatty acid + H(+). Functionally, catalyzes the hydrolysis of phosphatidylcholine with phospholipase A1 activity. May act as an allergen and induce hemolytic activity. The chain is Phospholipase A1 3 from Polistes dominula (European paper wasp).